Consider the following 151-residue polypeptide: MLSCWVLLLALLGGACALPAPLGYSQALAQAVDSYNQRPEVQNAFRLLSADPEPGPNVQLSSLHNLNFTIMETRCQARSGAQLDSCEFKEDGLVKDCAAPVVLQGGRAVLDVTCVDSMADPVRVKRFWPLVPVAINTVAAGINLYKAIRRK.

The N-terminal stretch at 1-17 is a signal peptide; sequence MLSCWVLLLALLGGACA. A propeptide spanning residues 18–122 is cleaved from the precursor; the sequence is LPAPLGYSQA…TCVDSMADPV (105 aa). Disulfide bonds link Cys-75–Cys-86 and Cys-97–Cys-114. A helical membrane pass occupies residues 128 to 148; the sequence is WPLVPVAINTVAAGINLYKAI.

This sequence belongs to the cathelicidin family. As to expression, detected in bone marrow, liver and lung.

It is found in the secreted. The protein resides in the membrane. In terms of biological role, may bind bacterial lipopolysaccharide (LPS). May have antimicrobial activity and play a role in the innate immune response. This Gallus gallus (Chicken) protein is Cathelicidin-3 (CATHL3).